A 134-amino-acid chain; its full sequence is Ribonuclease P protein component 2 (134 aa).

It belongs to the eukaryotic/archaeal RNase P protein component 2 family. Consists of a catalytic RNA component and at least 4-5 protein subunits. Forms a subcomplex with Rnp3 which stimulates the catalytic RNA.

It localises to the cytoplasm. It carries out the reaction Endonucleolytic cleavage of RNA, removing 5'-extranucleotides from tRNA precursor.. Functionally, part of ribonuclease P, a protein complex that generates mature tRNA molecules by cleaving their 5'-ends. The chain is Ribonuclease P protein component 2 from Methanocaldococcus jannaschii (strain ATCC 43067 / DSM 2661 / JAL-1 / JCM 10045 / NBRC 100440) (Methanococcus jannaschii).